Consider the following 350-residue polypeptide: UDP-3-O-acylglucosamine N-acyltransferase (350 aa).

Histidine 240 serves as the catalytic Proton acceptor.

Belongs to the transferase hexapeptide repeat family. LpxD subfamily. In terms of assembly, homotrimer.

It carries out the reaction a UDP-3-O-[(3R)-3-hydroxyacyl]-alpha-D-glucosamine + a (3R)-hydroxyacyl-[ACP] = a UDP-2-N,3-O-bis[(3R)-3-hydroxyacyl]-alpha-D-glucosamine + holo-[ACP] + H(+). Its pathway is bacterial outer membrane biogenesis; LPS lipid A biosynthesis. Catalyzes the N-acylation of UDP-3-O-acylglucosamine using 3-hydroxyacyl-ACP as the acyl donor. Is involved in the biosynthesis of lipid A, a phosphorylated glycolipid that anchors the lipopolysaccharide to the outer membrane of the cell. The protein is UDP-3-O-acylglucosamine N-acyltransferase of Methylobacillus flagellatus (strain ATCC 51484 / DSM 6875 / VKM B-1610 / KT).